Here is a 326-residue protein sequence, read N- to C-terminus: MRTEAQVPALQPPEPGLEGAMGHRTLVLPWVLLTLCVTAGTPEVWVQVRMEATELSSFTIRCGFLGSGSISLVTVSWGGPNGAGGTTLAVLHPERGIRQWAPARQARWETQSSISLILEGSGASSPCANTTFCCKFASFPEGSWEACGSLPPSSDPGLSAPPTPAPILRADLAGILGVSGVLLFGCVYLLHLLRRHKHRPAPRLQPSRTSPQAPRARAWAPSQASQAALHVPYATINTSCRPATLDTAHPHGGPSWWASLPTHAAHRPQGPAAWASTPIPARGSFVSVENGLYAQAGERPPHTGPGLTLFPDPRGPRAMEGPLGVR.

Transmembrane regions (helical) follow at residues 26-46 (LVLP…EVWV), 62-78 (CGFL…VSWG), and 172-192 (LAGI…LLHL). Tyr-233 bears the Phosphotyrosine mark. The segment at 296-326 (AGERPPHTGPGLTLFPDPRGPRAMEGPLGVR) is disordered.

In terms of assembly, interacts with NECTIN2, hence competing with CD226. Expressed in some types of immune cells. Expressed at low levels on the surface of freshly isolated T-cells and natural killer (NK) cells, predominantly on CD8+ T-cells (mainly memory/effector, but not naive cells) and on both CD16+ and CD16- NK cells. T-cell expression levels are variable among individuals. Not detected in B-cells, naive or helper T-cells, monocytes, nor neutrophils (at protein level). Not detected in dendritic cells.

It localises to the cell membrane. Functionally, cell surface receptor for NECTIN2. May act as a coinhibitory receptor that suppresses T-cell receptor-mediated signals. Following interaction with NECTIN2, inhibits T-cell proliferation. Competes with CD226 for NECTIN2-binding. The chain is Transmembrane protein PVRIG (PVRIG) from Homo sapiens (Human).